Consider the following 412-residue polypeptide: MAGSVGLALCGQTLVVRGGSRFLATSIASSDDDSLFIYDCSAAEKKSQENKGEDAPLDQGSGAILASTFSKSGSYFALTDDSKRLILFRTKPWQCLSVRTVARRCTALTFIASEEKVLVADKSGDVYSFSVLEPHGCGRLELGHLSMLLDVAVSPDDRFILTADRDEKIRVSWAAAPHSIESFCLGHTEFVSRISVVPTQPGLLLSSSGDGTLRLWEYRSGRQLHCCHLASLQELVDPQAPQKFAASRIAFWCQENCVALLCDGTPVVYIFQLDARRQQLVYRQQLAFQHQVWDVAFEETQGLWVLQDCQEAPLVLYRPVGDQWQSVPESTVLKKVSGVLRGNWAMLEGSAGADASFSSLYKATFDNVTSYLKKKEERLQQQLEKKQRRRSPPPGPDGHAKKMRPGEATLSC.

An N-acetylalanine modification is found at alanine 2. WD repeat units lie at residues glycine 3–cysteine 40, asparagine 50–threonine 90, glutamine 94–valine 131, cysteine 137–alanine 174, isoleucine 180–tyrosine 218, alanine 230–leucine 273, and proline 319–lysine 373. The disordered stretch occupies residues glutamate 377–cysteine 412. Serine 391 and serine 411 each carry phosphoserine.

Belongs to the WD repeat TRM82 family. In terms of assembly, non-catalytic component of the METTL1-WDR4 complex, composed of METTL1 and WDR4. Interacts with FEN1; the interaction is direct.

The protein resides in the nucleus. It localises to the chromosome. Its pathway is tRNA modification; N(7)-methylguanine-tRNA biosynthesis. Its function is as follows. Non-catalytic component of the METTL1-WDR4 methyltransferase complex required for the formation of N(7)-methylguanine in a subset of RNA species, such as tRNAs, mRNAs and microRNAs (miRNAs). In the METTL1-WDR4 methyltransferase complex, WDR4 acts as a scaffold for tRNA-binding. Required for the formation of N(7)-methylguanine at position 46 (m7G46) in a large subset of tRNAs that contain the 5'-RAGGU-3' motif within the variable loop. M7G46 interacts with C13-G22 in the D-loop to stabilize tRNA tertiary structure and protect tRNAs from decay. Also required for the formation of N(7)-methylguanine at internal sites in a subset of mRNAs. Also required for methylation of a specific subset of miRNAs, such as let-7. Independently of METTL1, also plays a role in genome stability: localizes at the DNA replication site and regulates endonucleolytic activities of FEN1. The sequence is that of tRNA (guanine-N(7)-)-methyltransferase non-catalytic subunit WDR4 from Homo sapiens (Human).